We begin with the raw amino-acid sequence, 233 residues long: Inner kinetochore subunit fta4 (233 aa).

Phosphothreonine occurs at positions 189 and 191.

Belongs to the NKP1 family. Component of the inner kinetochore constitutive centromere-associated network (CCAN) (also known as central kinetochore Sim4 complex in fission yeast), which is composed of at least cnl2, cnp3, cnp20, fta1, fta2, fta3, fta4, fta6, fta7, mal2, mhf1, mhf2, mis6, mis15, mis17, sim4 and wip1.

It is found in the nucleus. The protein localises to the chromosome. Its subcellular location is the centromere. It localises to the kinetochore. Functionally, component of the kinetochore, a multiprotein complex that assembles on centromeric DNA and attaches chromosomes to spindle microtubules, mediating chromosome segregation and sister chromatid segregation during meiosis and mitosis. Component of the inner kinetochore constitutive centromere-associated network (CCAN), which serves as a structural platform for outer kinetochore assembly. Fta2, fta3 and fta4 associate with the central core (cnt) and inner repeat (inr) region of the centromere. This Schizosaccharomyces pombe (strain 972 / ATCC 24843) (Fission yeast) protein is Inner kinetochore subunit fta4 (fta4).